The sequence spans 423 residues: 26S proteasome regulatory subunit 6B homolog (423 aa).

207-214 (GPPGTGKT) lines the ATP pocket.

Belongs to the AAA ATPase family.

It localises to the cytoplasm. The protein localises to the nucleus. Its function is as follows. The 26S proteasome is involved in the ATP-dependent degradation of ubiquitinated proteins. The regulatory (or ATPase) complex confers ATP dependency and substrate specificity to the 26S complex. In Aspergillus niger, this protein is 26S proteasome regulatory subunit 6B homolog (tbpA).